Here is a 301-residue protein sequence, read N- to C-terminus: UDP-N-acetylenolpyruvoylglucosamine reductase 1 (301 aa).

The FAD-binding PCMH-type domain occupies 29–196; sequence KIGGPADILI…LEAEFQLQIG (168 aa). Arg174 is a catalytic residue. Catalysis depends on Ser225, which acts as the Proton donor. The active site involves Glu295.

Belongs to the MurB family. FAD serves as cofactor.

It is found in the cytoplasm. The enzyme catalyses UDP-N-acetyl-alpha-D-muramate + NADP(+) = UDP-N-acetyl-3-O-(1-carboxyvinyl)-alpha-D-glucosamine + NADPH + H(+). The protein operates within cell wall biogenesis; peptidoglycan biosynthesis. Its function is as follows. Cell wall formation. The chain is UDP-N-acetylenolpyruvoylglucosamine reductase 1 from Bacillus thuringiensis subsp. konkukian (strain 97-27).